A 515-amino-acid chain; its full sequence is GMP synthase [glutamine-hydrolyzing] (515 aa).

One can recognise a Glutamine amidotransferase type-1 domain in the interval 6 to 198; it reads KVIIIDYGSQ…LFHVAKLKAD (193 aa). The Nucleophile role is filled by Cys-83. Catalysis depends on residues His-172 and Glu-174. Residues 199-390 enclose the GMPS ATP-PPase domain; the sequence is WTMSSFVERA…LGLPDFIIWR (192 aa). 226 to 232 contributes to the ATP binding site; the sequence is SGGIDST.

In terms of assembly, homodimer.

The enzyme catalyses XMP + L-glutamine + ATP + H2O = GMP + L-glutamate + AMP + diphosphate + 2 H(+). Its pathway is purine metabolism; GMP biosynthesis; GMP from XMP (L-Gln route): step 1/1. Its function is as follows. Catalyzes the synthesis of GMP from XMP. The protein is GMP synthase [glutamine-hydrolyzing] of Nitratidesulfovibrio vulgaris (strain DP4) (Desulfovibrio vulgaris).